A 150-amino-acid polypeptide reads, in one-letter code: Macrodomain Ter protein (150 aa).

It belongs to the MatP family. In terms of assembly, homodimer.

Its subcellular location is the cytoplasm. Functionally, required for spatial organization of the terminus region of the chromosome (Ter macrodomain) during the cell cycle. Prevents early segregation of duplicated Ter macrodomains during cell division. Binds specifically to matS, which is a 13 bp signature motif repeated within the Ter macrodomain. The sequence is that of Macrodomain Ter protein from Salmonella agona (strain SL483).